The following is a 327-amino-acid chain: 2-phosphoglycerate kinase (327 aa).

Basic and acidic residues predominate over residues 1–20; it reads MSEKSSRKERDEKTEKETAR. Residues 1-27 form a disordered region; sequence MSEKSSRKERDEKTEKETARQGKHRRI. The 87-residue stretch at 25–111 folds into the ATP-cone domain; sequence RRIRVKSRHY…LWRRIKKREE (87 aa).

This sequence belongs to the 2-phosphoglycerate kinase family. It depends on a divalent metal cation as a cofactor.

The catalysed reaction is (2R)-2-phosphoglycerate + ATP = (2R)-2,3-bisphosphoglycerate + ADP + H(+). Its pathway is thermoadapter biosynthesis; cyclic 2,3-diphosphoglycerate biosynthesis; cyclic 2,3-diphosphoglycerate from 2-phospho-D-glycerate: step 1/2. Catalyzes the phosphorylation of 2-phosphoglycerate to 2,3-diphosphoglycerate. Involved in the biosynthesis of cyclic 2,3-bisphosphoglycerate, a thermoprotectant. The protein is 2-phosphoglycerate kinase of Methanopyrus kandleri (strain AV19 / DSM 6324 / JCM 9639 / NBRC 100938).